The sequence spans 369 residues: Maltose/maltodextrin import ATP-binding protein MalK (369 aa).

The ABC transporter domain occupies 4 to 234; sequence VTLSSVYKAF…PANRFVAGFI (231 aa). Position 36–43 (36–43) interacts with ATP; that stretch reads GPSGCGKS.

The protein belongs to the ABC transporter superfamily. Maltooligosaccharide importer (TC 3.A.1.1.1) family. As to quaternary structure, the complex is composed of two ATP-binding proteins (MalK), two transmembrane proteins (MalG and MalK) and a solute-binding protein (MalE).

Its subcellular location is the cell inner membrane. It catalyses the reaction D-maltose(out) + ATP + H2O = D-maltose(in) + ADP + phosphate + H(+). Its function is as follows. Part of the ABC transporter complex MalEFGK involved in maltose/maltodextrin import. Responsible for energy coupling to the transport system. This is Maltose/maltodextrin import ATP-binding protein MalK from Yersinia pestis bv. Antiqua (strain Antiqua).